The chain runs to 215 residues: Large ribosomal subunit protein uL3 (215 aa).

Residues Gly-136–Lys-155 form a disordered region. Gln-151 carries the N5-methylglutamine modification.

It belongs to the universal ribosomal protein uL3 family. Part of the 50S ribosomal subunit. Forms a cluster with proteins L14 and L19. Methylated by PrmB.

One of the primary rRNA binding proteins, it binds directly near the 3'-end of the 23S rRNA, where it nucleates assembly of the 50S subunit. The protein is Large ribosomal subunit protein uL3 of Rickettsia africae (strain ESF-5).